Here is a 518-residue protein sequence, read N- to C-terminus: Serine incorporator 4 (518 aa).

Transmembrane regions (helical) follow at residues 59-79, 122-142, 153-173, 184-204, 222-242, 259-279, 286-306, 338-357, 427-447, and 470-490; these read CSRL…CLLL, VCAG…HLHS, SFWL…FCIP, IGIC…TAFA, FLAV…GAVL, LLSL…APCI, SGLL…FSAL, ISLA…FACN, AFHF…TNWF, and VASC…PLCW.

The protein belongs to the TDE1 family.

It localises to the membrane. Its function is as follows. Incorporates a polar amino acid serine into membranes and facilitates the synthesis of two serine-derived lipids, phosphatidylserine and sphingolipids. The protein is Serine incorporator 4 (SERINC4) of Homo sapiens (Human).